Here is a 106-residue protein sequence, read N- to C-terminus: MEEGELSTGAAAGGGDELYNALHQRLVASGEWQRLLILLRRMLDESGWESEFQAYATTKAKQQPVLSVPDLIDVLTPHAQDTLPAHVRAHLLDKLTNFLDRNLEDA.

This sequence belongs to the ENY2 family. As to quaternary structure, component of the nuclear pore complex (NPC)-associated TREX-2 complex (transcription and export complex 2), composed of at least SUS1, SAC3, THP1, SEM1, and CDC31. TREX-2 contains 2 SUS1 chains. The TREX-2 complex interacts with the nucleoporin NUP1. Component of the 1.8 MDa SAGA transcription coactivator-HAT complex. SAGA is built of 5 distinct domains with specialized functions. Within the SAGA complex, SUS1, SGF11, SGF73 and UBP8 form an additional subcomplex of SAGA called the DUB module (deubiquitination module). Interacts directly with THP1, SAC3, SGF11, and with the RNA polymerase II.

The protein localises to the nucleus. It localises to the nucleoplasm. The protein resides in the cytoplasm. It is found in the P-body. Functionally, involved in mRNA export coupled transcription activation by association with both the TREX-2 and the SAGA complexes. At the promoters, SAGA is required for recruitment of the basal transcription machinery. It influences RNA polymerase II transcriptional activity through different activities such as TBP interaction and promoter selectivity, interaction with transcription activators, and chromatin modification through histone acetylation and deubiquitination. Within the SAGA complex, participates in a subcomplex required for deubiquitination of H2B and for the maintenance of steady-state H3 methylation levels. The TREX-2 complex functions in docking export-competent ribonucleoprotein particles (mRNPs) to the nuclear entrance of the nuclear pore complex (nuclear basket). TREX-2 participates in mRNA export and accurate chromatin positioning in the nucleus by tethering genes to the nuclear periphery. May also be involved in cytoplasmic mRNA decay by interaction with components of P-bodies. The polypeptide is Transcription and mRNA export factor SUS1 (Mycosarcoma maydis (Corn smut fungus)).